The chain runs to 73 residues: Small proline-rich protein 2G (73 aa).

Residues 1–11 are compositionally biased toward low complexity; that stretch reads MSYQQQQCKQP. Positions 1–20 are disordered; that stretch reads MSYQQQQCKQPCQPPPVCPT. Repeat copies occupy residues 21–29, 30–38, and 39–47. Residues 21–47 are 3 X 9 AA approximate tandem repeats; sequence PKCPEPCPPPKCPEPYLPPPCPPEHCP.

Belongs to the cornifin (SPRR) family.

The protein localises to the cytoplasm. In terms of biological role, cross-linked envelope protein of keratinocytes. It is a keratinocyte protein that first appears in the cell cytosol, but ultimately becomes cross-linked to membrane proteins by transglutaminase. All that results in the formation of an insoluble envelope beneath the plasma membrane. The chain is Small proline-rich protein 2G (SPRR2G) from Homo sapiens (Human).